The sequence spans 376 residues: Deoxyguanosinetriphosphate triphosphohydrolase-like protein (376 aa).

Positions 62-198 (RLTHSLEVSA…AALADDISYI (137 aa)) constitute an HD domain.

It belongs to the dGTPase family. Type 2 subfamily.

This chain is Deoxyguanosinetriphosphate triphosphohydrolase-like protein, found in Rickettsia canadensis (strain McKiel).